Consider the following 561-residue polypeptide: Dihydroxy-acid dehydratase 3 (561 aa).

Residue cysteine 50 participates in [2Fe-2S] cluster binding. Aspartate 82 provides a ligand contact to Mg(2+). Cysteine 123 is a [2Fe-2S] cluster binding site. Mg(2+) is bound by residues aspartate 124 and lysine 125. The residue at position 125 (lysine 125) is an N6-carboxylysine. Cysteine 195 contributes to the [2Fe-2S] cluster binding site. Mg(2+) is bound at residue glutamate 447. Serine 473 acts as the Proton acceptor in catalysis.

The protein belongs to the IlvD/Edd family. As to quaternary structure, homodimer. The cofactor is [2Fe-2S] cluster. Mg(2+) serves as cofactor.

The catalysed reaction is (2R)-2,3-dihydroxy-3-methylbutanoate = 3-methyl-2-oxobutanoate + H2O. It carries out the reaction (2R,3R)-2,3-dihydroxy-3-methylpentanoate = (S)-3-methyl-2-oxopentanoate + H2O. Its pathway is amino-acid biosynthesis; L-isoleucine biosynthesis; L-isoleucine from 2-oxobutanoate: step 3/4. It participates in amino-acid biosynthesis; L-valine biosynthesis; L-valine from pyruvate: step 3/4. Functionally, functions in the biosynthesis of branched-chain amino acids. Catalyzes the dehydration of (2R,3R)-2,3-dihydroxy-3-methylpentanoate (2,3-dihydroxy-3-methylvalerate) into 2-oxo-3-methylpentanoate (2-oxo-3-methylvalerate) and of (2R)-2,3-dihydroxy-3-methylbutanoate (2,3-dihydroxyisovalerate) into 2-oxo-3-methylbutanoate (2-oxoisovalerate), the penultimate precursor to L-isoleucine and L-valine, respectively. The chain is Dihydroxy-acid dehydratase 3 from Bordetella bronchiseptica (strain ATCC BAA-588 / NCTC 13252 / RB50) (Alcaligenes bronchisepticus).